Here is a 231-residue protein sequence, read N- to C-terminus: Probable methylthioribulose-1-phosphate dehydratase (231 aa).

Residue Cys-90 coordinates substrate. Zn(2+) is bound by residues His-108 and His-110. Glu-132 functions as the Proton donor/acceptor in the catalytic mechanism. Residue His-188 participates in Zn(2+) binding.

It belongs to the aldolase class II family. MtnB subfamily. Zn(2+) serves as cofactor.

It is found in the cytoplasm. It catalyses the reaction 5-(methylsulfanyl)-D-ribulose 1-phosphate = 5-methylsulfanyl-2,3-dioxopentyl phosphate + H2O. It participates in amino-acid biosynthesis; L-methionine biosynthesis via salvage pathway; L-methionine from S-methyl-5-thio-alpha-D-ribose 1-phosphate: step 2/6. Functionally, catalyzes the dehydration of methylthioribulose-1-phosphate (MTRu-1-P) into 2,3-diketo-5-methylthiopentyl-1-phosphate (DK-MTP-1-P). The sequence is that of Probable methylthioribulose-1-phosphate dehydratase from Anopheles gambiae (African malaria mosquito).